The following is a 656-amino-acid chain: Replication protein A 70 kDa DNA-binding subunit A (656 aa).

Positions 225-307 (AIKARVTAKG…NHLNNEWEIL (83 aa)) form a DNA-binding region, OB. The C4-type zinc-finger motif lies at 516-542 (CPNMIGDRQCNKKVTKSTNGNWTCDKC).

This sequence belongs to the replication factor A protein 1 family. As to quaternary structure, heterotrimer of RPA1, RPA2 and RPA3 (canonical replication protein A complex). Interacts with RPA2B. Expressed in root tips, roots, shoot apical meristem (SAM), young leaves, flag leaves and ears, and at lower levels in mature leaves.

Its subcellular location is the nucleus. Functionally, component of the replication protein A complex (RPA) required for DNA recombination, repair and replication. The activity of RPA is mediated by single-stranded DNA binding and protein interactions. Plays an essential role in meiotic and somatic DNA repair, but is dispensable for DNA replication and homologous recombination. Is essential for normal progression through meiosis in pollen mother cells. Is involved in repair of double-strand DNA breaks (DSBs) induced by genotoxic stresses. In Oryza sativa subsp. japonica (Rice), this protein is Replication protein A 70 kDa DNA-binding subunit A (RPA1A).